The chain runs to 123 residues: uncharacterized protein (123 aa).

Residues 36-76 (VDRQENKKEFLSAEEAREKFKELINQVRSWKEQMSTLSKYA) are a coiled coil.

This is an uncharacterized protein from Aquifex aeolicus (strain VF5).